We begin with the raw amino-acid sequence, 843 residues long: MSYMPAQNRTMSHNNQYNPPDLPPMVSAKEQTLMWQQNSYLGDSGIHSGAVTQVPSLSGKEDEEMEGDPLMFDLDTGFPQNFTQDQVDDMNQQLSQTRSQRVRAAMFPETLEEGIEIPSTQFDPQQPTAVQRLSEPSQMLKHAVVNLINYQDDAELATRAIPELIKLLNDEDQVVVSQAAMMVHQLSKKEASRHAIMNSPQMVAALVRAISNSNDLESTKAAVGTLHNLSHHRQGLLAIFKSGGIPALVKLLSSPVESVLFYAITTLHNLLLHQDGSKMAVRLAGGLQKMVTLLQRNNVKFLAIVTDCLQILAYGNQESKLIILASGGPNELVRIMRSYDYEKLLWTTSRVLKVLSVCSSNKPAIVDAGGMQALAMHLGNMSPRLVQNCLWTLRNLSDAATKVEGLEALLQSLVQVLGSTDVNVVTCAAGILSNLTCNNQRNKATVCQVGGVDALVRTIINAGDREEITEPAVCALRHLTSRHVDSELAQNAVRLNYGLSVIVKLLHPPSRWPLIKAVIGLIRNLALCPANHAPLREHGAIHHLVRLLMRAFQDTERQRSSIATTGSQQPSAYADGVRMEEIVEGTVGALHILARESHNRALIRQQSVIPIFVRLLFNEIENIQRVAAGVLCELAADKEGAEIIEQEGATGPLTDLLHSRNEGVATYAAAVLFRMSEDKPQDYKKRLSIELTNSLLREDNNIWANADLGMGPDLQDMLGPEEAYEGLYGQGPPSVHSSHGGRAFHQQGYDTLPIDSMQGLEISSPVGGGGAGGAPGNGGAVGGASGGGGNIGAIPPSGAPTSPYSMDMDVGEIDAGALNFDLDAMPTPPNDNNNLAAWYDTDC.

12 ARM repeats span residues 159 to 200 (RAIP…MNSP), 201 to 242 (QMVA…IFKS), 243 to 284 (GGIP…VRLA), 285 to 326 (GGLQ…ILAS), 327 to 368 (GGPN…IVDA), 369 to 410 (GGMQ…EALL), 411 to 449 (QSLVQVLGSTDVNVVTCAAGILSNLTCNNQRNKATVCQV), 450 to 496 (GGVD…VRLN), 497 to 538 (YGLS…LREH), 539 to 584 (GAIH…EIVE), 585 to 608 (GTVGALHILARESHNRALIRQQSV), and 609 to 647 (IPIFVRLLFNEIENIQRVAAGVLCELAADKEGAEIIEQE). Residues 648–689 (GATGPLTDLLHSRNEGVATYAAAVLFRMSEDKPQDYKKRLSI) form an ARM 13; truncated repeat. Threonine 650 is modified (phosphothreonine). Residues serine 688 and serine 694 each carry the phosphoserine modification.

Belongs to the beta-catenin family. In terms of assembly, interacts with Mer and Moe at the adherens junction. Interacts with Inx2. Interacts with alpha-Cat. Interacts with Myo31DF. In terms of processing, phosphorylated on Ser, Thr and Tyr residues. Level of phosphorylation varies both during embryonic development and from embryonic tissue to tissue. Sgg is required for phosphorylation and wg signal negatively regulates arm phosphorylation. Hypophosphorylated form of arm increases in steady-state levels. Phosphorylated directly or indirectly by CkIalpha which stimulates its degradation. In terms of tissue distribution, isoform cytoplasmic accumulates at low levels in axons, at high levels in specific cells along the CNS midline and in leg and eye imaginal disks. Isoform neural accumulates in the axon tracts of the CNS. Both isoforms accumulate in the peripheral nervous system.

Its subcellular location is the cytoplasm. It localises to the cell membrane. The protein localises to the cell junction. It is found in the adherens junction. In terms of biological role, isoform neural may associate with CadN and participate in the transmission of developmental information. Can associate with alpha-catenin. Isoform cytoplasmic accumulates through wg signaling; arm function in wg signal transduction is required early in development for determination of neuroblast fate. Arm and Abl proteins function cooperatively at adherens junctions in both the CNS and epidermis. In Drosophila melanogaster (Fruit fly), this protein is Armadillo segment polarity protein (arm).